A 503-amino-acid chain; its full sequence is Probable cytosol aminopeptidase (503 aa).

Mn(2+) contacts are provided by Lys-270 and Asp-275. Residue Lys-282 is part of the active site. Mn(2+) is bound by residues Asp-293, Asp-352, and Glu-354. Arg-356 is an active-site residue.

The protein belongs to the peptidase M17 family. Mn(2+) is required as a cofactor.

The protein resides in the cytoplasm. The enzyme catalyses Release of an N-terminal amino acid, Xaa-|-Yaa-, in which Xaa is preferably Leu, but may be other amino acids including Pro although not Arg or Lys, and Yaa may be Pro. Amino acid amides and methyl esters are also readily hydrolyzed, but rates on arylamides are exceedingly low.. It carries out the reaction Release of an N-terminal amino acid, preferentially leucine, but not glutamic or aspartic acids.. Presumably involved in the processing and regular turnover of intracellular proteins. Catalyzes the removal of unsubstituted N-terminal amino acids from various peptides. The protein is Probable cytosol aminopeptidase of Enterobacter sp. (strain 638).